The chain runs to 596 residues: Elongation factor 4 (596 aa).

The 183-residue stretch at 2-184 folds into the tr-type G domain; the sequence is RNIRNFSIIA…AIVHRIPPPT (183 aa). GTP contacts are provided by residues 14–19 and 131–134; these read DHGKST and NKID.

This sequence belongs to the TRAFAC class translation factor GTPase superfamily. Classic translation factor GTPase family. LepA subfamily.

It localises to the cell inner membrane. The catalysed reaction is GTP + H2O = GDP + phosphate + H(+). Required for accurate and efficient protein synthesis under certain stress conditions. May act as a fidelity factor of the translation reaction, by catalyzing a one-codon backward translocation of tRNAs on improperly translocated ribosomes. Back-translocation proceeds from a post-translocation (POST) complex to a pre-translocation (PRE) complex, thus giving elongation factor G a second chance to translocate the tRNAs correctly. Binds to ribosomes in a GTP-dependent manner. The protein is Elongation factor 4 of Xanthomonas oryzae pv. oryzae (strain PXO99A).